The sequence spans 906 residues: Cadherin-2 (906 aa).

A signal peptide spans 1-25 (MCRIAGAPRTLLPLLAALLQASVEA). Residues 26–159 (SGEIALCKTG…HSGALQRQKR (134 aa)) constitute a propeptide that is removed on maturation. Cadherin domains lie at 160-267 (DWVI…RPEF), 268-382 (LHQV…PPEF), 383-497 (TAMT…NPYF), 498-603 (APNP…DNAP), and 604-717 (QVLP…RIVG). At 160–724 (DWVIPPINLP…IVGAGLGTGA (565 aa)) the chain is on the extracellular side. Glu-170 is a binding site for Ca(2+). The N-linked (GlcNAc...) asparagine glycan is linked to Asn-190. Ca(2+)-binding residues include Asp-226, Glu-228, Asp-259, Met-260, Asn-261, Asp-262, and Asn-263. Asn-273 carries N-linked (GlcNAc...) asparagine glycosylation. Ca(2+) is bound by residues Asp-293, Asp-295, and Asn-301. N-linked (GlcNAc...) asparagine glycosylation occurs at Asn-325. Asp-353 is a binding site for Ca(2+). N-linked (GlcNAc...) asparagine glycans are attached at residues Asn-402, Asn-572, Asn-651, and Asn-692. The helical transmembrane segment at 725-745 (IIAILLCIIILLILVLMFVVW) threads the bilayer. The Cytoplasmic segment spans residues 746-906 (MKRRDKERQA…LADMYGGGDD (161 aa)). The segment covering 863 to 880 (SGSTAGSLSSLNSSSSGG) has biased composition (low complexity). Positions 863-883 (SGSTAGSLSSLNSSSSGGDQD) are disordered.

In terms of assembly, homodimer (via extracellular region). Can also form heterodimers with other cadherins (via extracellular region). Dimerization occurs in trans, i.e. with a cadherin chain from another cell. Interacts with CDCP1. Interacts with PCDH8; this complex may also include TAOK2. The interaction with PCDH8 may lead to internalization through TAOK2/p38 MAPK pathway. Identified in a complex containing FGFR4, NCAM1, CDH2, PLCG1, FRS2, SRC, SHC1, GAP43 and CTTN. May interact with OBSCN (via protein kinase domain 2). Interacts with FBXO45. Post-translationally, cleaved by MMP24. Ectodomain cleavage leads to the generation of a soluble 90 kDa N-terminal soluble fragment and a 45 kDa membrane-bound C-terminal fragment 1 (CTF1), which is further cleaved by gamma-secretase into a 35 kDa. Cleavage in neural stem cells by MMP24 affects CDH2-mediated anchorage of neural stem cells to ependymocytes in the adult subependymal zone, leading to modulate neural stem cell quiescence. May be phosphorylated by OBSCN. In terms of processing, O-glycosylated on Ser and Thr residues. As to expression, expressed in cardiac muscle (at protein level).

Its subcellular location is the cell membrane. The protein resides in the sarcolemma. It localises to the cell junction. It is found in the adherens junction. The protein localises to the desmosome. Its subcellular location is the cell surface. Calcium-dependent cell adhesion protein; preferentially mediates homotypic cell-cell adhesion by dimerization with a CDH2 chain from another cell. Cadherins may thus contribute to the sorting of heterogeneous cell types. Acts as a regulator of neural stem cells quiescence by mediating anchorage of neural stem cells to ependymocytes in the adult subependymal zone: upon cleavage by MMP24, CDH2-mediated anchorage is affected, leading to modulate neural stem cell quiescence. Plays a role in cell-to-cell junction formation between pancreatic beta cells and neural crest stem (NCS) cells, promoting the formation of processes by NCS cells. Required for proper neurite branching. Required for pre- and postsynaptic organization. CDH2 may be involved in neuronal recognition mechanism. In hippocampal neurons, may regulate dendritic spine density. This chain is Cadherin-2 (Cdh2), found in Mus musculus (Mouse).